The sequence spans 299 residues: Trans-aconitate 3-methyltransferase (299 aa).

Ser-2 carries the post-translational modification N-acetylserine.

It belongs to the methyltransferase superfamily. Tam family.

Its subcellular location is the cytoplasm. It carries out the reaction trans-aconitate + S-adenosyl-L-methionine = (E)-2-(methoxycarbonylmethyl)but-2-enedioate + S-adenosyl-L-homocysteine. Functionally, catalyzes the S-adenosylmethionine monomethyl esterification of trans-aconitate and 3-isopropylmalate at high affinity and of other molecules like cis-aconitate, isocitrate, and citrate at lower velocities and affinities. The function of trans-aconitate methylation appears to be in reducing the toxicity of this spontaneous breakdown product of cis-aconitate. The role of 3-isopropylmalate methylation is unclear but may represent a metabolic branch at 3-isopropylmalate, where some of the material is taken in the pathway leading to leucine and some is taken in a pathway to the 3-isopropylmalate methyl ester, a molecule that provides a signal to switch from vegetative to invasive growth in response to amino acid starvation. In Saccharomyces cerevisiae (strain ATCC 204508 / S288c) (Baker's yeast), this protein is Trans-aconitate 3-methyltransferase (TMT1).